The chain runs to 168 residues: S-ribosylhomocysteine lyase (168 aa).

3 residues coordinate Fe cation: His54, His58, and Cys128.

This sequence belongs to the LuxS family. In terms of assembly, homodimer. Fe cation serves as cofactor.

It catalyses the reaction S-(5-deoxy-D-ribos-5-yl)-L-homocysteine = (S)-4,5-dihydroxypentane-2,3-dione + L-homocysteine. In terms of biological role, involved in the synthesis of autoinducer 2 (AI-2) which is secreted by bacteria and is used to communicate both the cell density and the metabolic potential of the environment. The regulation of gene expression in response to changes in cell density is called quorum sensing. Catalyzes the transformation of S-ribosylhomocysteine (RHC) to homocysteine (HC) and 4,5-dihydroxy-2,3-pentadione (DPD). The chain is S-ribosylhomocysteine lyase from Histophilus somni (strain 2336) (Haemophilus somnus).